Reading from the N-terminus, the 260-residue chain is MRKDPLVIAGREYQSRLLVGTGKYKDFAETRAAIDAAGAEIVTVALRRMNLGQSKDAPNLLEFLPADRFTILPNTAGCYTAEDAVRTCRLARELGDWKLVKLEVIGDPQTLYPDMRQTYDAAKTLIAEGFEVMVYSVDDPVACKTFAEMGCVAVMPLAAPIGSGLGIRNPYNLRIILEQATVPILVDAGVGTASDVAVALELGCDGVLLNTAIAAAKDPILMAEAMRQGVEAGRKAFLAGRMPRKLYASASSPVDGLFFE.

Residue Lys-101 is the Schiff-base intermediate with DXP of the active site. Residues Gly-162, 188 to 189, and 210 to 211 contribute to the 1-deoxy-D-xylulose 5-phosphate site; these read AG and NT.

The protein belongs to the ThiG family. Homotetramer. Forms heterodimers with either ThiH or ThiS.

The protein localises to the cytoplasm. It catalyses the reaction [ThiS sulfur-carrier protein]-C-terminal-Gly-aminoethanethioate + 2-iminoacetate + 1-deoxy-D-xylulose 5-phosphate = [ThiS sulfur-carrier protein]-C-terminal Gly-Gly + 2-[(2R,5Z)-2-carboxy-4-methylthiazol-5(2H)-ylidene]ethyl phosphate + 2 H2O + H(+). It participates in cofactor biosynthesis; thiamine diphosphate biosynthesis. In terms of biological role, catalyzes the rearrangement of 1-deoxy-D-xylulose 5-phosphate (DXP) to produce the thiazole phosphate moiety of thiamine. Sulfur is provided by the thiocarboxylate moiety of the carrier protein ThiS. In vitro, sulfur can be provided by H(2)S. This chain is Thiazole synthase, found in Acidithiobacillus ferrooxidans (strain ATCC 23270 / DSM 14882 / CIP 104768 / NCIMB 8455) (Ferrobacillus ferrooxidans (strain ATCC 23270)).